The chain runs to 250 residues: 3-deoxy-manno-octulosonate cytidylyltransferase (250 aa).

It belongs to the KdsB family.

The protein resides in the cytoplasm. It carries out the reaction 3-deoxy-alpha-D-manno-oct-2-ulosonate + CTP = CMP-3-deoxy-beta-D-manno-octulosonate + diphosphate. It functions in the pathway nucleotide-sugar biosynthesis; CMP-3-deoxy-D-manno-octulosonate biosynthesis; CMP-3-deoxy-D-manno-octulosonate from 3-deoxy-D-manno-octulosonate and CTP: step 1/1. Its pathway is bacterial outer membrane biogenesis; lipopolysaccharide biosynthesis. Its function is as follows. Activates KDO (a required 8-carbon sugar) for incorporation into bacterial lipopolysaccharide in Gram-negative bacteria. The chain is 3-deoxy-manno-octulosonate cytidylyltransferase from Herminiimonas arsenicoxydans.